We begin with the raw amino-acid sequence, 283 residues long: SNAP25 homologous protein SNAP32 (283 aa).

Disordered regions lie at residues 1-64 and 192-212; these read MSGR…AAAR and LGLS…EPTS. The span at 198-212 shows a compositional bias: polar residues; it reads PPQSNARQFHSEPTS. Positions 218–280 constitute a t-SNARE coiled-coil homology domain; sequence EMEKAKQDDG…KGANTRARRL (63 aa).

Belongs to the SNAP-25 family. Interacts with SYP121. Expressed in roots, culms and leaves.

It localises to the membrane. Its function is as follows. t-SNARE involved in diverse vesicle trafficking and membrane fusion processes. May be involved in resistance to the rice blast fungus Magnaporthe oryzae. May contribute to host resistance to rice blast through interaction with SYP121. The chain is SNAP25 homologous protein SNAP32 from Oryza sativa subsp. japonica (Rice).